The primary structure comprises 301 residues: Protoheme IX farnesyltransferase (301 aa).

9 helical membrane-spanning segments follow: residues 9–29 (VLAY…VATI), 42–62 (IALI…ANSL), 89–109 (TSHA…WLWW), 113–133 (LLAG…YTMV), 142–162 (VVWG…AVTG), 168–188 (PIVL…ALAM), 211–231 (VTKQ…TLVP), 232–252 (AAGV…LLMA), and 280–300 (VVFV…GSLL).

Belongs to the UbiA prenyltransferase family. Protoheme IX farnesyltransferase subfamily.

It is found in the cell membrane. The enzyme catalyses heme b + (2E,6E)-farnesyl diphosphate + H2O = Fe(II)-heme o + diphosphate. The protein operates within porphyrin-containing compound metabolism; heme O biosynthesis; heme O from protoheme: step 1/1. Functionally, converts heme B (protoheme IX) to heme O by substitution of the vinyl group on carbon 2 of heme B porphyrin ring with a hydroxyethyl farnesyl side group. This Rhodococcus jostii (strain RHA1) protein is Protoheme IX farnesyltransferase.